We begin with the raw amino-acid sequence, 582 residues long: uncharacterized protein (582 aa).

Transmembrane regions (helical) follow at residues 17-37, 57-77, 131-151, 156-176, 239-259, and 271-291; these read VAML…LPTV, LGAV…GAVY, MTAT…IMAI, ALTW…YWII, ALML…LIWF, and VGSL…VLMA. One can recognise an ABC transmembrane type-1 domain in the interval 17 to 300; sequence VAMLMMLQLV…ATMTLAVLPR (284 aa). In terms of domain architecture, ABC transporter spans 335–571; that stretch reads VRLAGATFTY…CPTYAEFAAS (237 aa). 369–376 serves as a coordination point for ATP; that stretch reads GSTGSGKS.

The protein belongs to the ABC transporter superfamily.

It is found in the cell membrane. This is an uncharacterized protein from Mycobacterium tuberculosis (strain CDC 1551 / Oshkosh).